The chain runs to 801 residues: Cation/H(+) antiporter 7 (801 aa).

The next 13 helical transmembrane spans lie at 58-78 (PNLE…EILF), 83-103 (IPIP…LFSY), 128-148 (GAFG…VGML), 154-174 (RAAL…YILM), 192-212 (EIIL…LTDL), 223-243 (VQSC…GTVL), 254-274 (IVIV…MLWI), 287-307 (VYIY…LNFF), 312-332 (YGWF…SALI), 340-360 (VGVL…ISWL), 377-397 (AISV…ITAF), 407-427 (IVLA…LGYI), and 438-458 (FTIA…AIEF).

It belongs to the monovalent cation:proton antiporter 2 (CPA2) transporter (TC 2.A.37) family. CHX (TC 2.A.37.4) subfamily. As to expression, expressed in pollen.

The protein resides in the membrane. In terms of biological role, may operate as a cation/H(+) antiporter. The chain is Cation/H(+) antiporter 7 (CHX7) from Arabidopsis thaliana (Mouse-ear cress).